The following is a 198-amino-acid chain: NAD(P)H dehydrogenase (quinone) (198 aa).

The Flavodoxin-like domain maps to 4-189 (ILVLYYSMYG…SIARYQGEYV (186 aa)). FMN-binding positions include 10–15 (SMYGHI) and 78–80 (TRF). Y12 is an NAD(+) binding site. W98 is a binding site for substrate. FMN is bound by residues 113–118 (STGTGG) and H133.

It belongs to the WrbA family. Requires FMN as cofactor.

It carries out the reaction a quinone + NADH + H(+) = a quinol + NAD(+). It catalyses the reaction a quinone + NADPH + H(+) = a quinol + NADP(+). The sequence is that of NAD(P)H dehydrogenase (quinone) from Salmonella paratyphi C (strain RKS4594).